An 871-amino-acid chain; its full sequence is Translation initiation factor IF-2 (871 aa).

Disordered stretches follow at residues 60–101 (KKNI…QEVK) and 184–203 (ESLK…KKES). Over residues 61–72 (KNIKTPTAKKPK) the composition is skewed to basic residues. Residues 73-101 (KENIKEQEKLNESEKKEPKKEEKLKQEVK) are compositionally biased toward basic and acidic residues. The tr-type G domain maps to 370–537 (TRAPVITIMG…IVLLQADILE (168 aa)). The G1 stretch occupies residues 379–386 (GHVDHGKT). A GTP-binding site is contributed by 379 to 386 (GHVDHGKT). Positions 404–408 (GITQH) are G2. A G3 region spans residues 425–428 (DTPG). GTP is bound by residues 425–429 (DTPGH) and 479–482 (NKMD). Residues 479-482 (NKMD) form a G4 region. The interval 515 to 517 (SAK) is G5.

It belongs to the TRAFAC class translation factor GTPase superfamily. Classic translation factor GTPase family. IF-2 subfamily.

It localises to the cytoplasm. Functionally, one of the essential components for the initiation of protein synthesis. Protects formylmethionyl-tRNA from spontaneous hydrolysis and promotes its binding to the 30S ribosomal subunits. Also involved in the hydrolysis of GTP during the formation of the 70S ribosomal complex. In Campylobacter jejuni (strain RM1221), this protein is Translation initiation factor IF-2.